A 154-amino-acid polypeptide reads, in one-letter code: Putative esterase AF_2264 (154 aa).

This sequence belongs to the thioesterase PaaI family.

The chain is Putative esterase AF_2264 from Archaeoglobus fulgidus (strain ATCC 49558 / DSM 4304 / JCM 9628 / NBRC 100126 / VC-16).